A 62-amino-acid chain; its full sequence is Large ribosomal subunit protein eL37 (62 aa).

Zn(2+) is bound by residues Cys20, Cys23, Cys35, and Cys38. The C4-type zinc-finger motif lies at 20–38 (CRRCGRHSFNVAKGYCAAC).

The protein belongs to the eukaryotic ribosomal protein eL37 family. Zn(2+) serves as cofactor.

Binds to the 23S rRNA. The polypeptide is Large ribosomal subunit protein eL37 (Desulfurococcus amylolyticus (strain DSM 18924 / JCM 16383 / VKM B-2413 / 1221n) (Desulfurococcus kamchatkensis)).